The following is a 200-amino-acid chain: NADH-quinone oxidoreductase subunit C (200 aa).

This sequence belongs to the complex I 30 kDa subunit family. NDH-1 is composed of 14 different subunits. Subunits NuoB, C, D, E, F, and G constitute the peripheral sector of the complex.

The protein localises to the cell inner membrane. The catalysed reaction is a quinone + NADH + 5 H(+)(in) = a quinol + NAD(+) + 4 H(+)(out). In terms of biological role, NDH-1 shuttles electrons from NADH, via FMN and iron-sulfur (Fe-S) centers, to quinones in the respiratory chain. The immediate electron acceptor for the enzyme in this species is believed to be ubiquinone. Couples the redox reaction to proton translocation (for every two electrons transferred, four hydrogen ions are translocated across the cytoplasmic membrane), and thus conserves the redox energy in a proton gradient. This is NADH-quinone oxidoreductase subunit C from Burkholderia ambifaria (strain ATCC BAA-244 / DSM 16087 / CCUG 44356 / LMG 19182 / AMMD) (Burkholderia cepacia (strain AMMD)).